Reading from the N-terminus, the 342-residue chain is Renalase (342 aa).

The N-terminal stretch at 1-17 is a signal peptide; sequence MAQVLIVGAGMTGSLCA. FAD is bound by residues T12, R42, and 61–62; that span reads QY.

Belongs to the renalase family. FAD serves as cofactor. As to expression, secreted into the blood by the kidney. Highly expressed in the kidney, expressed at lower level in heart, skeletal muscle and small intestine. Its plasma concentration is markedly reduced in patients with end-stage renal disease, as compared with healthy subjects.

It localises to the secreted. It catalyses the reaction 1,2-dihydro-beta-NAD + O2 + H(+) = H2O2 + NAD(+). The enzyme catalyses 1,2-dihydro-beta-NADP + O2 + H(+) = H2O2 + NADP(+). It carries out the reaction 1,6-dihydro-beta-NADP + O2 + H(+) = H2O2 + NADP(+). The catalysed reaction is 1,6-dihydro-beta-NAD + O2 + H(+) = H2O2 + NAD(+). Catalyzes the oxidation of the less abundant 1,2-dihydro-beta-NAD(P) and 1,6-dihydro-beta-NAD(P) to form beta-NAD(P)(+). The enzyme hormone is secreted by the kidney, and circulates in blood and modulates cardiac function and systemic blood pressure. Lowers blood pressure in vivo by decreasing cardiac contractility and heart rate and preventing a compensatory increase in peripheral vascular tone, suggesting a causal link to the increased plasma catecholamine and heightened cardiovascular risk. High concentrations of catecholamines activate plasma renalase and promotes its secretion and synthesis. The chain is Renalase (RNLS) from Homo sapiens (Human).